A 284-amino-acid polypeptide reads, in one-letter code: D-tagatose-1,6-bisphosphate aldolase subunit GatY (284 aa).

Aspartate 82 serves as the catalytic Proton donor. Zn(2+) is bound by residues histidine 83 and histidine 180. Glycine 181 serves as a coordination point for dihydroxyacetone phosphate. A Zn(2+)-binding site is contributed by histidine 208. Dihydroxyacetone phosphate is bound by residues 209 to 211 and 230 to 233; these read GAS and NVAT.

It belongs to the class II fructose-bisphosphate aldolase family. TagBP aldolase GatY subfamily. As to quaternary structure, forms a complex with GatZ. It depends on Zn(2+) as a cofactor.

The enzyme catalyses D-tagatofuranose 1,6-bisphosphate = D-glyceraldehyde 3-phosphate + dihydroxyacetone phosphate. Its pathway is carbohydrate metabolism; D-tagatose 6-phosphate degradation; D-glyceraldehyde 3-phosphate and glycerone phosphate from D-tagatose 6-phosphate: step 2/2. In terms of biological role, catalytic subunit of the tagatose-1,6-bisphosphate aldolase GatYZ, which catalyzes the reversible aldol condensation of dihydroxyacetone phosphate (DHAP or glycerone-phosphate) with glyceraldehyde 3-phosphate (G3P) to produce tagatose 1,6-bisphosphate (TBP). Requires GatZ subunit for full activity and stability. Is involved in the catabolism of galactitol. The polypeptide is D-tagatose-1,6-bisphosphate aldolase subunit GatY (Salmonella paratyphi B (strain ATCC BAA-1250 / SPB7)).